We begin with the raw amino-acid sequence, 247 residues long: uncharacterized protein (247 aa).

Residues 200 to 225 (SGKYSELKTKVNDIENDLRTLSSNTN) are a coiled coil.

This is an uncharacterized protein from Acanthamoeba polyphaga (Amoeba).